Consider the following 187-residue polypeptide: CASP-like protein 2C1 (187 aa).

Topologically, residues 1–14 (MVAAARVVSGVKAE) are cytoplasmic. A helical membrane pass occupies residues 15-35 (GLLRGACAALAAAAALLLGLS). Residues 36–54 (TQTETVLLVRKKGTVKDVQ) lie on the Extracellular side of the membrane. A helical membrane pass occupies residues 55–75 (ALWVLAMAAASAAGYHLLQLL). Over 76–97 (KCLYLGRGGGRALAWTCLLLDK) the chain is Cytoplasmic. A helical membrane pass occupies residues 98 to 118 (ACAYATFATTVAAAQACVVAL). Residues 119 to 139 (DGAHALQWTKLCNIYTRFCEQ) lie on the Extracellular side of the membrane. Residues 140–160 (VAGSLVLGMLAAVGTAVLSAA) form a helical membrane-spanning segment. Residues 161–187 (SARNVFRHYYCSSHSPPAPPPETCDAH) lie on the Cytoplasmic side of the membrane.

This sequence belongs to the Casparian strip membrane proteins (CASP) family. Homodimer and heterodimers.

Its subcellular location is the cell membrane. The protein is CASP-like protein 2C1 of Zea mays (Maize).